The sequence spans 153 residues: SsrA-binding protein (153 aa).

It belongs to the SmpB family.

It localises to the cytoplasm. Its function is as follows. Required for rescue of stalled ribosomes mediated by trans-translation. Binds to transfer-messenger RNA (tmRNA), required for stable association of tmRNA with ribosomes. tmRNA and SmpB together mimic tRNA shape, replacing the anticodon stem-loop with SmpB. tmRNA is encoded by the ssrA gene; the 2 termini fold to resemble tRNA(Ala) and it encodes a 'tag peptide', a short internal open reading frame. During trans-translation Ala-aminoacylated tmRNA acts like a tRNA, entering the A-site of stalled ribosomes, displacing the stalled mRNA. The ribosome then switches to translate the ORF on the tmRNA; the nascent peptide is terminated with the 'tag peptide' encoded by the tmRNA and targeted for degradation. The ribosome is freed to recommence translation, which seems to be the essential function of trans-translation. This Desulforudis audaxviator (strain MP104C) protein is SsrA-binding protein.